The sequence spans 661 residues: Heme transporter BhuA (661 aa).

The first 23 residues, 1–23, serve as a signal peptide directing secretion; it reads MKFTRTLVLASTSLLATVATSQA. Residues 48 to 159 form the TBDR plug domain; sequence KDNIEATGGT…AAGAIRYETV (112 aa). The TBDR beta-barrel domain occupies 170–661; that stretch reads TFGARIIGSY…TFTFQTAFKF (492 aa).

This sequence belongs to the TonB-dependent receptor family.

The protein localises to the cell outer membrane. Heme transporter. In Brucella ovis (strain ATCC 25840 / 63/290 / NCTC 10512), this protein is Heme transporter BhuA (bhuA).